Consider the following 495-residue polypeptide: Adenosylhomocysteinase (495 aa).

Positions 71, 156, and 218 each coordinate substrate. 219–221 (TTT) lines the NAD(+) pocket. Positions 248 and 252 each coordinate substrate. NAD(+)-binding positions include Asn-253, 282-287 (GYGDVG), Glu-305, Asn-340, 361-363 (IGH), and Asn-409.

Belongs to the adenosylhomocysteinase family. NAD(+) is required as a cofactor.

The protein localises to the cytoplasm. The enzyme catalyses S-adenosyl-L-homocysteine + H2O = L-homocysteine + adenosine. Its pathway is amino-acid biosynthesis; L-homocysteine biosynthesis; L-homocysteine from S-adenosyl-L-homocysteine: step 1/1. Its function is as follows. May play a key role in the regulation of the intracellular concentration of adenosylhomocysteine. This Mycobacterium bovis (strain ATCC BAA-935 / AF2122/97) protein is Adenosylhomocysteinase.